Reading from the N-terminus, the 202-residue chain is Imidazoleglycerol-phosphate dehydratase (202 aa).

The protein belongs to the imidazoleglycerol-phosphate dehydratase family.

The protein resides in the cytoplasm. It catalyses the reaction D-erythro-1-(imidazol-4-yl)glycerol 3-phosphate = 3-(imidazol-4-yl)-2-oxopropyl phosphate + H2O. It participates in amino-acid biosynthesis; L-histidine biosynthesis; L-histidine from 5-phospho-alpha-D-ribose 1-diphosphate: step 6/9. The polypeptide is Imidazoleglycerol-phosphate dehydratase (Mycolicibacterium gilvum (strain PYR-GCK) (Mycobacterium gilvum (strain PYR-GCK))).